The primary structure comprises 254 residues: MGLFIETSGRGPEVVLIHGWGMHGGIWSGFVPWLTDRFRVTRIDLPGHGHSPMLADWSLETVAGAVLEAVPRPAHWVGWSLGAMVALEAARMAPGAVASLTLLCGTPRFVAEPGWPGMEAVTLMRFADGFLSDYEDACRRFLALQAWGMPNERELLRGVRSQLSGRPPPERPALLAGLEVLRHADLRGVLRELPQPVQALLGRRDRLVPVELGDALARLKTGLVSHRIDDAPHVPFLTHGERTARLIHEFIASS.

Residues Trp20, 80-81 (SL), and 141-145 (FLALQ) each bind substrate. Residue Ser80 is the Nucleophile of the active site. Active-site residues include Asp205 and His233. His233 lines the substrate pocket.

The protein belongs to the AB hydrolase superfamily. Carboxylesterase BioH family. Monomer.

It is found in the cytoplasm. It catalyses the reaction 6-carboxyhexanoyl-[ACP] methyl ester + H2O = 6-carboxyhexanoyl-[ACP] + methanol + H(+). The protein operates within cofactor biosynthesis; biotin biosynthesis. Functionally, the physiological role of BioH is to remove the methyl group introduced by BioC when the pimeloyl moiety is complete. It allows to synthesize pimeloyl-ACP via the fatty acid synthetic pathway through the hydrolysis of the ester bonds of pimeloyl-ACP esters. The chain is Pimeloyl-[acyl-carrier protein] methyl ester esterase from Methylococcus capsulatus (strain ATCC 33009 / NCIMB 11132 / Bath).